The sequence spans 109 residues: Small ribosomal subunit protein uS17 (109 aa).

It belongs to the universal ribosomal protein uS17 family. As to quaternary structure, part of the 30S ribosomal subunit.

One of the primary rRNA binding proteins, it binds specifically to the 5'-end of 16S ribosomal RNA. This is Small ribosomal subunit protein uS17 from Methanococcoides burtonii (strain DSM 6242 / NBRC 107633 / OCM 468 / ACE-M).